Reading from the N-terminus, the 285-residue chain is Flagellar filament 30.7 kDa core protein (285 aa).

Belongs to the bacterial flagellin family. In terms of assembly, the core of the flagellum consists of several antigenically related polypeptides. Glycosylated. Glycosylation is not essential for motility.

It localises to the periplasmic flagellum. The protein localises to the periplasm. In terms of biological role, component of the core of the flagella. In Treponema maltophilum, this protein is Flagellar filament 30.7 kDa core protein (flaB3).